The following is a 308-amino-acid chain: Aspartate carbamoyltransferase catalytic subunit (308 aa).

Arg59 and Thr60 together coordinate carbamoyl phosphate. Lys87 is an L-aspartate binding site. 3 residues coordinate carbamoyl phosphate: Arg109, His137, and Gln140. The L-aspartate site is built by Arg173 and Arg224. Residues Gly267 and Pro268 each contribute to the carbamoyl phosphate site.

The protein belongs to the aspartate/ornithine carbamoyltransferase superfamily. ATCase family. In terms of assembly, heterododecamer (2C3:3R2) of six catalytic PyrB chains organized as two trimers (C3), and six regulatory PyrI chains organized as three dimers (R2).

The enzyme catalyses carbamoyl phosphate + L-aspartate = N-carbamoyl-L-aspartate + phosphate + H(+). Its pathway is pyrimidine metabolism; UMP biosynthesis via de novo pathway; (S)-dihydroorotate from bicarbonate: step 2/3. In terms of biological role, catalyzes the condensation of carbamoyl phosphate and aspartate to form carbamoyl aspartate and inorganic phosphate, the committed step in the de novo pyrimidine nucleotide biosynthesis pathway. The protein is Aspartate carbamoyltransferase catalytic subunit of Helicobacter acinonychis (strain Sheeba).